A 285-amino-acid polypeptide reads, in one-letter code: Small ribosomal subunit protein uS2 (285 aa).

The segment at 229–285 (AGLASGDAKPEAGAGEPLAEWEQELLAQANPNAEGSAEAAPAAATEEAPAAQTPADF) is disordered. Low complexity predominate over residues 257-285 (ANPNAEGSAEAAPAAATEEAPAAQTPADF).

This sequence belongs to the universal ribosomal protein uS2 family.

The protein is Small ribosomal subunit protein uS2 of Nocardia farcinica (strain IFM 10152).